The sequence spans 498 residues: ATP synthase subunit beta, chloroplastic (498 aa).

Residue 172 to 179 (GGAGVGKT) coordinates ATP.

The protein belongs to the ATPase alpha/beta chains family. As to quaternary structure, F-type ATPases have 2 components, CF(1) - the catalytic core - and CF(0) - the membrane proton channel. CF(1) has five subunits: alpha(3), beta(3), gamma(1), delta(1), epsilon(1). CF(0) has four main subunits: a(1), b(1), b'(1) and c(9-12).

Its subcellular location is the plastid. The protein resides in the chloroplast thylakoid membrane. The catalysed reaction is ATP + H2O + 4 H(+)(in) = ADP + phosphate + 5 H(+)(out). Its function is as follows. Produces ATP from ADP in the presence of a proton gradient across the membrane. The catalytic sites are hosted primarily by the beta subunits. The sequence is that of ATP synthase subunit beta, chloroplastic from Populus trichocarpa (Western balsam poplar).